A 181-amino-acid polypeptide reads, in one-letter code: Adenine phosphoribosyltransferase (181 aa).

The protein belongs to the purine/pyrimidine phosphoribosyltransferase family. Homodimer.

It is found in the cytoplasm. The catalysed reaction is AMP + diphosphate = 5-phospho-alpha-D-ribose 1-diphosphate + adenine. It functions in the pathway purine metabolism; AMP biosynthesis via salvage pathway; AMP from adenine: step 1/1. Functionally, catalyzes a salvage reaction resulting in the formation of AMP, that is energically less costly than de novo synthesis. The sequence is that of Adenine phosphoribosyltransferase from Methylobacterium sp. (strain 4-46).